Consider the following 324-residue polypeptide: tRNA U34 carboxymethyltransferase (324 aa).

Carboxy-S-adenosyl-L-methionine is bound by residues K92, W106, K111, G131, 181–182 (LE), M197, Y201, and R316.

It belongs to the class I-like SAM-binding methyltransferase superfamily. CmoB family. Homotetramer.

The catalysed reaction is carboxy-S-adenosyl-L-methionine + 5-hydroxyuridine(34) in tRNA = 5-carboxymethoxyuridine(34) in tRNA + S-adenosyl-L-homocysteine + H(+). Its function is as follows. Catalyzes carboxymethyl transfer from carboxy-S-adenosyl-L-methionine (Cx-SAM) to 5-hydroxyuridine (ho5U) to form 5-carboxymethoxyuridine (cmo5U) at position 34 in tRNAs. The protein is tRNA U34 carboxymethyltransferase of Syntrophotalea carbinolica (strain DSM 2380 / NBRC 103641 / GraBd1) (Pelobacter carbinolicus).